Here is a 751-residue protein sequence, read N- to C-terminus: MATLPPRKSQTPTRICISKQHLTPLQTLLQMGFPRHRAEKALASTGNRGVQIASDWLLAHVNDGTLDECAPREYIIYACPTGPFLQQLEEFWAKSRQMCGWNGAHNYVPHITLVSFFKAPDECSLQLSKALKQVVDMTGALLDRPLKLEPYMSQNFMGFFVAEEDANYLKRLALQYVKEVSNSIISDTYEQLDAIVACFPWCGAVSSGTRCIPRSSRSISLEPHVKSLHLTLAYQFPQAQFNALKALVETLDASCASNWELRLYSRDPRLATKQVQKVVYPHNPHETDELELRIGDYIYLNTEVVDSSSDGWAEGISWLTGSTGHLPVNYTERTAESDAWTLHRVVQLSKSVASSLTSAEDLDIVDGRSISTEPDDRQNTAHPDIIEGSSFEESEQSVEKYLRQTLKPCLELPSVQLLNSHNLTHQHNPNTPTIEITTNMSSSSTSMSKQPVDEILVEPPAAQPPRPDDTLSVHSDHSLHPGSLDASHAKNRKIYIMRHGERVDFTFGTWIPYCFDEFGNYMRKDLNMPKTLPRRKNSPEGWQNDSPLTNVGVYQANLIGQALLEAQVQIDHVYCSPSYRCIQTCTSALEGLKLTGKQKIKLEPGLFEWMAWYPSGVPDWLTKNELTEAKFDVDLDYEPVQPASELTARLKESTEQFYERNHDVILQLLEQTTGNILVVAHATTLDTCSRQLTGGVPRSTNELRQVIHKIPYCSLATVEQVDGVWKLVEPECLPVTHSKNPRFEWNALSAT.

Residues 16-60 (CISKQHLTPLQTLLQMGFPRHRAEKALASTGNRGVQIASDWLLAH) enclose the UBA domain. An SH3 domain is found at 271–336 (ATKQVQKVVY…PVNYTERTAE (66 aa)). 2 disordered regions span residues 367-394 (GRSI…FEES) and 458-484 (EPPA…PGSL). Residues 466–479 (RPDDTLSVHSDHSL) show a composition bias toward basic and acidic residues. The phosphatase-like stretch occupies residues 490–751 (KNRKIYIMRH…RFEWNALSAT (262 aa)). Arg-498 is an active-site residue. The active-site Tele-phosphohistidine intermediate is the His-499. His-681 is an active-site residue.

Its subcellular location is the cytoplasm. The protein localises to the cytosol. It localises to the nucleus. It catalyses the reaction ecdysone 22-phosphate + H2O = ecdysone + phosphate. The catalysed reaction is 20-hydroxyecdysone 22-phosphate + H2O = 20-hydroxyecdysone + phosphate. The enzyme catalyses 2-deoxyecdysone 22-phosphate + H2O = 2-deoxyecdysone + phosphate. In terms of biological role, steroid phosphatase that dephosphorylates ecdysteroids such as ecdysone 22-phosphate (E22P), 3-epi-ecdysone 22-phosphate (E22P) and 3-epi-ecdysone 2-phosphate (E2P). Likely catalyzes the conversion of inactive phosphorylated ecdysteroids into their active forms. Shows high activity towards ecdysone 22-phosphate (E22P), but is also significantly active against 3-epi-ecdysone 22-phosphate (E22P) and 3-epi-ecdysone 2-phosphate (E2P). Also displays acid phosphatase activity towards 4-nitrophenyl phosphate (pNNP) in vitro. Has no activity towards 3-epi-ecdysone 3-phosphate (E3P). The protein is Ecdysteroid-phosphate phosphatase of Drosophila melanogaster (Fruit fly).